The sequence spans 85 residues: Anti-neuroexcitation peptide 2 (85 aa).

The signal sequence occupies residues methionine 1–alanine 21. Positions aspartate 22–glycine 82 constitute an LCN-type CS-alpha/beta domain. 4 disulfides stabilise this stretch: cysteine 31/cysteine 81, cysteine 35/cysteine 56, cysteine 42/cysteine 63, and cysteine 46/cysteine 65.

It belongs to the long (4 C-C) scorpion toxin superfamily. Sodium channel inhibitor family. Beta subfamily. As to expression, expressed by the venom gland.

The protein resides in the secreted. In terms of biological role, binds to sodium channels (Nav) and inhibits them. Recombinant ANEP delays the convulsion seizure of insect models by 18% and shows anti-neuroexcitatory activity. The chain is Anti-neuroexcitation peptide 2 from Olivierus martensii (Manchurian scorpion).